The primary structure comprises 67 residues: LPS-assembly lipoprotein LptM (67 aa).

Positions 1-19 (MKNVFKALTVLLTLFSLTG) are cleaved as a signal peptide. C20 is lipidated: N-palmitoyl cysteine. Residue C20 is the site of S-diacylglycerol cysteine attachment. The segment at 26-67 (LYFPPADKNAPPPTKPVETQTQSTVPDKNDRATGDGPSQVNY) is disordered. Residues 42 to 51 (VETQTQSTVP) show a composition bias toward polar residues.

Belongs to the LptM family. As to quaternary structure, interacts with the outer membrane embedded portion of the LPS translocon formed by LptD and LptE (LptDE).

The protein localises to the cell outer membrane. In terms of biological role, component of the lipopolysaccharide (LPS) transport (Lpt) pathway that promotes efficient assembly of the outer membrane LPS translocon (LptDE) by the BAM complex. Facilitates oxidative maturation of LptD by stabilizing a conformation of the LPS translocon in which LptD can efficiently acquire native disulfide bonds, thereby activating the LPS translocon. This chain is LPS-assembly lipoprotein LptM, found in Escherichia coli O157:H7.